A 505-amino-acid polypeptide reads, in one-letter code: MRLRRLALFPGVALLLAAARLAAASDVLELTDDNFESRISDTGSAGLMLVEFFAPWCGHCKRLAPEYEAAATRLKGIVPLAKVDCTANTNTCNKYGVSGYPTLKIFRDGEEAGAYDGPRTADGIVSHLKKQAGPASVPLRTEEEFKKFISDKDASIVGFFDDSFSEAHSEFLKAASNLRDNYRFAHTNVESLVNEYDDNGEGIILFRPSHLTNKFEDKTVAYTEQKMTSGKIKKFIQENIFGICPHMTEDNKDLIQGKDLLIAYYDVDYEKNAKGSNYWRNRVMMVAKKFLDAGHKLNFAVASRKTFSHELSDFGLESTAGEIPVVAIRTAKGEKFVMQEEFSRDGKALERFLQDYFDGNLKRYLKSEPIPESNDGPVKVVVAENFDEIVNNENKDVLIEFYAPWCGHCKNLEPKYKELGEKLSKDPNIVIAKMDATANDVPSPYEVRGFPTIYFSPANKKLNPKKYEGGRELSDFISYLQREATNPPVIQEEKPKKKKKAQEDL.

Positions 1-24 are cleaved as a signal peptide; the sequence is MRLRRLALFPGVALLLAAARLAAA. Residues 25-133 form the Thioredoxin 1 domain; it reads SDVLELTDDN…IVSHLKKQAG (109 aa). Active-site nucleophile residues include Cys57 and Cys60. The cysteines at positions 57 and 60 are disulfide-linked. Lys61 is modified (N6-methyllysine). A disulfide bridge connects residues Cys85 and Cys92. Lys129 bears the N6-succinyllysine mark. Lys152 carries the N6-acetyllysine modification. Lys218 bears the N6-succinyllysine mark. The residue at position 252 (Lys252) is an N6-acetyllysine. At Thr319 the chain carries Phosphothreonine. One can recognise a Thioredoxin 2 domain in the interval 343 to 485; that stretch reads SRDGKALERF…FISYLQREAT (143 aa). The residue at position 362 (Lys362) is an N6-acetyllysine. Residues Cys406 and Cys409 each act as nucleophile in the active site. Cys406 and Cys409 are disulfide-bonded. The tract at residues 484-505 is disordered; sequence ATNPPVIQEEKPKKKKKAQEDL. The span at 491 to 505 shows a compositional bias: basic and acidic residues; that stretch reads QEEKPKKKKKAQEDL. Lys494 bears the N6-acetyllysine mark. The Prevents secretion from ER motif lies at 502 to 505; it reads QEDL.

Part of the major histocompatibility complex class I (MHC I) peptide loading complex composed of TAP1, TAP2, B2M, MHC heavy chain, TAPBP, PDIA3, and CALR. Interacts with ERP27 and CANX. Interacts with SERPINA2 and with the S and Z variants of SERPINA1. Interacts with ATP2A2. Post-translationally, within the major histocompatibility complex class I (MHC I) peptide loading complex forms reversible disulfide-linked heterodimers with TAPBP as part of its protein folding chaperone activity. This is essential to assist the dynamic assembly of the MHC I complex with high affinity antigens in the endoplasmic reticulum. In terms of processing, phosphorylated. As to expression, detected in the flagellum and head region of spermatozoa (at protein level). Expressed in liver, stomach and colon (at protein level). Expressed in gastric parietal cells and chief cells (at protein level).

It localises to the endoplasmic reticulum. The protein localises to the endoplasmic reticulum lumen. The protein resides in the melanosome. The enzyme catalyses Catalyzes the rearrangement of -S-S- bonds in proteins.. With respect to regulation, association with calcitriol does not affect its enzymatic activity. Functionally, protein disulfide isomerase that catalyzes the formation, isomerization, and reduction or oxidation of disulfide bonds in client proteins and functions as a protein folding chaperone. Core component of the major histocompatibility complex class I (MHC I) peptide loading complex where it functions as an essential folding chaperone for TAPBP. Through TAPBP, assists the dynamic assembly of the MHC I complex with high affinity antigens in the endoplasmic reticulum. Therefore, plays a crucial role in the presentation of antigens to cytotoxic T cells in adaptive immunity. The protein is Protein disulfide-isomerase A3 of Homo sapiens (Human).